The sequence spans 693 residues: Iron-sulfur clusters transporter atm1, mitochondrial (693 aa).

The transit peptide at 1–28 (MLERCPWKLISSPRNIPARSFLNSRGTY) directs the protein to the mitochondrion. At 29-118 (LVLRKSNILP…PKGKTNLKVR (90 aa)) the chain is on the mitochondrial matrix side. The helical transmembrane segment at 119-140 (VVSALALLVAAKILNVQVPFYF) threads the bilayer. Residues 119–409 (VVSALALLVA…LGSVYREMRQ (291 aa)) enclose the ABC transmembrane type-1 domain. At 141–163 (KSIIDTMNTTLVQEVGALWSTVG) the chain is on the mitochondrial intermembrane side. A helical membrane pass occupies residues 164 to 187 (AVVLGYGFARIFSTVFQELRNSVF). At 188 to 236 (AIVSQSAIRSVSSNVYQHLLNLDMNFHLSKQTGSITRAMDRGTKGISFI) the chain is on the mitochondrial matrix side. Residues 237-260 (LSSMVLHIIPITLEIAMVSGILTY) form a helical membrane-spanning segment. Lys-261 is a topological domain (mitochondrial intermembrane). A helical transmembrane segment spans residues 262 to 282 (YGPSFSAIAATTVALYALFTV). The Mitochondrial matrix segment spans residues 283-348 (RTTSWRTVFR…ANVKVASSLA (66 aa)). Glutathione is bound by residues 288–292 (RTVFR) and 351–354 (NSGQ). Residues 349–367 (FLNSGQAIIFSTALTLMMY) traverse the membrane as a helical segment. Over 368 to 382 (MGCRGIVTSNLTVGD) the chain is Mitochondrial intermembrane. The helical transmembrane segment at 383–404 (LVMINQLVFQLSIPLNFLGSVY) threads the bilayer. Glutathione is bound at residue Gly-401. The Mitochondrial matrix portion of the chain corresponds to 405-693 (REMRQAFTDM…FGESNKSGDA (289 aa)). Residues 443 to 679 (IQFDNVHFSY…NSVYTSMWHS (237 aa)) enclose the ABC transporter domain. Residues Tyr-452 and 476 to 487 (GASGCGKSTILR) each bind ATP.

This sequence belongs to the ABC transporter superfamily. ABCB family. Heavy Metal importer (TC 3.A.1.210) subfamily. In terms of assembly, homodimer.

The protein localises to the mitochondrion inner membrane. Performs an essential function in the generation of cytoplasmic iron-sulfur proteins by mediating the ATP-dependent export of Fe/S cluster precursors synthesized by nfs1 and other mitochondrial proteins. Hydrolyzes ATP. Binds glutathione and may function by transporting a glutathione-conjugated iron-sulfur compound. The chain is Iron-sulfur clusters transporter atm1, mitochondrial from Schizosaccharomyces pombe (strain 972 / ATCC 24843) (Fission yeast).